A 460-amino-acid chain; its full sequence is MSFTIAIIGRPNVGKSTLFNRLVGQKLALVDDKPGVTRDRREGQARLGDLDFTVIDTAGLDEGPRGSLTARMQEQTETAIAAADALMFVFDARAGLTPTDRSFADFARRANKPVVLVANKSEGRHGEAGALESYALGLGDPVGVSAEHGEGMSDLYDALRGVMPEPTEEAEEFDDDDIIESEDISQRPIRVAIVGRPNAGKSTLINYLLGEERLLTSPEAGTTRDSISVELNWQGRDFRIFDTAGLRRRSRIEEKLEKLSVADTLRAARFAEVVVLMMDAQNRFEEQDLRIADLIEREGRALVIAVNKWDLMGRQSSLIAALRTDADHLLPQVKGMPIVAVSGLMGEGVDRLMTAIQDAYAIWNRRVPTAALNRWFEQAVDANPPPAVSGRRLKLNYVTQAKARPPSFIVFCSRADAVPESYLRYLVNSLRGFFDLPGTPIRITLREKANPFAHKRKRKS.

EngA-type G domains follow at residues 3 to 167 (FTIA…PEPT) and 189 to 364 (IRVA…AIWN). Residues 9-16 (GRPNVGKS), 56-60 (DTAGL), 119-122 (NKSE), 195-202 (GRPNAGKS), 242-246 (DTAGL), and 307-310 (NKWD) contribute to the GTP site. A KH-like domain is found at 365-449 (RRVPTAALNR…PIRITLREKA (85 aa)).

This sequence belongs to the TRAFAC class TrmE-Era-EngA-EngB-Septin-like GTPase superfamily. EngA (Der) GTPase family. Associates with the 50S ribosomal subunit.

GTPase that plays an essential role in the late steps of ribosome biogenesis. The sequence is that of GTPase Der from Nitrobacter hamburgensis (strain DSM 10229 / NCIMB 13809 / X14).